Consider the following 135-residue polypeptide: uncharacterized protein (135 aa).

3 helical membrane passes run 13–35 (AKVI…AMYL), 82–101 (VAVF…LLSI), and 108–130 (IYRI…PLIL).

It is found in the cell membrane. This is an uncharacterized protein from Archaeoglobus fulgidus (strain ATCC 49558 / DSM 4304 / JCM 9628 / NBRC 100126 / VC-16).